A 1134-amino-acid chain; its full sequence is Nck-associated protein 1-like (1134 aa).

The disordered stretch occupies residues 638 to 671 (KAKNKKSMKQRQAPRKGEPERDKPGAESHRKNRS). Over residues 639–651 (AKNKKSMKQRQAP) the composition is skewed to basic residues. The segment covering 652 to 666 (RKGEPERDKPGAESH) has biased composition (basic and acidic residues). A helical transmembrane segment spans residues 999 to 1019 (LLLIFLAVSLPLLATDPSSFF).

As to quaternary structure, in hematopoietic cells, component of the WAVE2 complex composed of ABI1, CYFIP1/SRA1, NCKAP1L/HEM1 and WASF2/WAVE2. Interacts with ARHGAP4, PIK3C3/VPS34 and PPP1R12A/MYPT1. Interacts with mammalian target of rapamycin complex 2 (mTORC2) components, including MTOR and RICTOR. In terms of tissue distribution, predominantly expressed in developing and mature hematopoietic cells. Also detected in urogenital tissues, including testis.

It localises to the membrane. The protein resides in the cytoplasm. Functionally, essential hematopoietic-specific regulator of the actin cytoskeleton. Controls lymphocyte development, activation, proliferation and homeostasis, erythrocyte membrane stability, as well as phagocytosis and migration by neutrophils and macrophages. Component of the WAVE2 complex which signals downstream of RAC to stimulate F-actin polymerization. Required for stabilization and/or translation of the WAVE2 complex proteins in hematopoietic cells. Within the WAVE2 complex, enables the cortical actin network to restrain excessive degranulation and granule release by T-cells. Required for efficient T-lymphocyte and neutrophil migration. Exhibits complex cycles of activation and inhibition to generate waves of propagating the assembly with actin. Also involved in mechanisms WAVE independent to regulate myosin and actin polymerization during neutrophil chemotaxis. In T-cells, required for proper mechanistic target of rapamycin complex 2 (mTORC2)-dependent AKT phosphorylation, cell proliferation and cytokine secretion, including that of IL2 and TNF. This chain is Nck-associated protein 1-like, found in Mus musculus (Mouse).